A 181-amino-acid polypeptide reads, in one-letter code: SecB-like chaperone Rv1957 (181 aa).

Threonine 2 bears the N-acetylthreonine mark.

Belongs to the SecB-like family. Homotetramer, interacts with antitoxin HigA1.

Chaperone component of an atypical, type II toxin-antitoxin chaperone (TAC) system. Prevents antitoxin HigA1 aggregation in vitro at a 1:3 chaperone:antitoxin ratio, probably also protects antitoxin HigA1 from protease. Required for neutralization of toxin HigB1 upon ectopic expression in Mycobacterium marinum or E.coli. When expressed in E.coli complements a secB deletion, restores export of OmpA and MBP and inhibits aggregation of proOmpC although it is less efficient than endogenous SecB. Complements the general chaperone function of E.coli SecB less well. This is SecB-like chaperone Rv1957 (secBL) from Mycobacterium tuberculosis (strain ATCC 25618 / H37Rv).